Consider the following 346-residue polypeptide: Holliday junction branch migration complex subunit RuvB (346 aa).

A large ATPase domain (RuvB-L) region spans residues 1-182 (MSERLVTSNE…LGVLCSMEYY (182 aa)). ATP-binding positions include Leu21, Arg22, Gly63, Lys66, Thr67, Thr68, 129–131 (EDY), Arg172, Tyr182, and Arg219. Thr67 lines the Mg(2+) pocket. A small ATPAse domain (RuvB-S) region spans residues 183 to 253 (TDEQLKEIII…AAKKSLEILE (71 aa)). The segment at 256 to 346 (GEGFDRIDNK…DSKQCTLFEK (91 aa)) is head domain (RuvB-H). Arg311 and Arg316 together coordinate DNA.

The protein belongs to the RuvB family. In terms of assembly, homohexamer. Forms an RuvA(8)-RuvB(12)-Holliday junction (HJ) complex. HJ DNA is sandwiched between 2 RuvA tetramers; dsDNA enters through RuvA and exits via RuvB. An RuvB hexamer assembles on each DNA strand where it exits the tetramer. Each RuvB hexamer is contacted by two RuvA subunits (via domain III) on 2 adjacent RuvB subunits; this complex drives branch migration. In the full resolvosome a probable DNA-RuvA(4)-RuvB(12)-RuvC(2) complex forms which resolves the HJ.

It is found in the cytoplasm. It carries out the reaction ATP + H2O = ADP + phosphate + H(+). The RuvA-RuvB-RuvC complex processes Holliday junction (HJ) DNA during genetic recombination and DNA repair, while the RuvA-RuvB complex plays an important role in the rescue of blocked DNA replication forks via replication fork reversal (RFR). RuvA specifically binds to HJ cruciform DNA, conferring on it an open structure. The RuvB hexamer acts as an ATP-dependent pump, pulling dsDNA into and through the RuvAB complex. RuvB forms 2 homohexamers on either side of HJ DNA bound by 1 or 2 RuvA tetramers; 4 subunits per hexamer contact DNA at a time. Coordinated motions by a converter formed by DNA-disengaged RuvB subunits stimulates ATP hydrolysis and nucleotide exchange. Immobilization of the converter enables RuvB to convert the ATP-contained energy into a lever motion, pulling 2 nucleotides of DNA out of the RuvA tetramer per ATP hydrolyzed, thus driving DNA branch migration. The RuvB motors rotate together with the DNA substrate, which together with the progressing nucleotide cycle form the mechanistic basis for DNA recombination by continuous HJ branch migration. Branch migration allows RuvC to scan DNA until it finds its consensus sequence, where it cleaves and resolves cruciform DNA. The sequence is that of Holliday junction branch migration complex subunit RuvB from Clostridium perfringens (strain 13 / Type A).